The sequence spans 715 residues: Fatty acid oxidation complex subunit alpha (715 aa).

The tract at residues 1-190 (MIYEGKAITV…KVGAVDAVVA (190 aa)) is enoyl-CoA hydratase/isomerase. Residue Asp297 participates in substrate binding. The 3-hydroxyacyl-CoA dehydrogenase stretch occupies residues 312-715 (HDVKQAAVLG…MAKNGQRFFN (404 aa)). Residues Met325, Asp344, 401–403 (VVE), Lys408, and Ser430 each bind NAD(+). His451 functions as the For 3-hydroxyacyl-CoA dehydrogenase activity in the catalytic mechanism. Asn454 contributes to the NAD(+) binding site. Residues Asn501 and Tyr660 each contribute to the substrate site.

In the N-terminal section; belongs to the enoyl-CoA hydratase/isomerase family. The protein in the C-terminal section; belongs to the 3-hydroxyacyl-CoA dehydrogenase family. Heterotetramer of two alpha chains (FadB) and two beta chains (FadA).

It carries out the reaction a (3S)-3-hydroxyacyl-CoA + NAD(+) = a 3-oxoacyl-CoA + NADH + H(+). It catalyses the reaction a (3S)-3-hydroxyacyl-CoA = a (2E)-enoyl-CoA + H2O. The catalysed reaction is a 4-saturated-(3S)-3-hydroxyacyl-CoA = a (3E)-enoyl-CoA + H2O. The enzyme catalyses (3S)-3-hydroxybutanoyl-CoA = (3R)-3-hydroxybutanoyl-CoA. It carries out the reaction a (3Z)-enoyl-CoA = a 4-saturated (2E)-enoyl-CoA. It catalyses the reaction a (3E)-enoyl-CoA = a 4-saturated (2E)-enoyl-CoA. The protein operates within lipid metabolism; fatty acid beta-oxidation. In terms of biological role, involved in the aerobic and anaerobic degradation of long-chain fatty acids via beta-oxidation cycle. Catalyzes the formation of 3-oxoacyl-CoA from enoyl-CoA via L-3-hydroxyacyl-CoA. It can also use D-3-hydroxyacyl-CoA and cis-3-enoyl-CoA as substrate. In Pseudomonas entomophila (strain L48), this protein is Fatty acid oxidation complex subunit alpha.